The following is a 154-amino-acid chain: Large-conductance mechanosensitive channel (154 aa).

2 helical membrane-spanning segments follow: residues valine 14 to leucine 34 and valine 86 to valine 106.

This sequence belongs to the MscL family. As to quaternary structure, homopentamer.

Its subcellular location is the cell membrane. In terms of biological role, channel that opens in response to stretch forces in the membrane lipid bilayer. May participate in the regulation of osmotic pressure changes within the cell. The chain is Large-conductance mechanosensitive channel from Dehalococcoides mccartyi (strain ATCC BAA-2100 / JCM 16839 / KCTC 5957 / BAV1).